A 432-amino-acid polypeptide reads, in one-letter code: Enolase (432 aa).

Gln167 lines the (2R)-2-phosphoglycerate pocket. Glu209 acts as the Proton donor in catalysis. Positions 246, 290, and 317 each coordinate Mg(2+). (2R)-2-phosphoglycerate contacts are provided by Lys342, Arg371, Ser372, and Lys393. Catalysis depends on Lys342, which acts as the Proton acceptor.

Belongs to the enolase family. In terms of assembly, component of the RNA degradosome, a multiprotein complex involved in RNA processing and mRNA degradation. Mg(2+) is required as a cofactor.

It localises to the cytoplasm. The protein localises to the secreted. Its subcellular location is the cell surface. It catalyses the reaction (2R)-2-phosphoglycerate = phosphoenolpyruvate + H2O. It participates in carbohydrate degradation; glycolysis; pyruvate from D-glyceraldehyde 3-phosphate: step 4/5. Catalyzes the reversible conversion of 2-phosphoglycerate (2-PG) into phosphoenolpyruvate (PEP). It is essential for the degradation of carbohydrates via glycolysis. The sequence is that of Enolase from Salmonella agona (strain SL483).